The sequence spans 768 residues: Histone-lysine N-methyltransferase, H3 lysine-36 specific (768 aa).

The 46-residue stretch at 45–90 (AEVMACDCKPGPTACDEDSGCINRLTSIECVRCCKGCQNKRFQGKK) folds into the AWS domain. Residues 92–209 (ASVDVISTEK…RGEEVTFDYN (118 aa)) enclose the SET domain. Residues 216 to 232 (EAQACYCGEKNCVGFLG) enclose the Post-SET domain. A compositionally biased stretch (basic and acidic residues) spans 411-452 (KIDPDGDEHSVSRGTSEEVTKESSKSEEPNDVEVVKVNKKAD). Disordered regions lie at residues 411–508 (KIDP…KGWQ), 533–610 (KASR…VNAQ), and 680–768 (VVKR…IDLE). The span at 453 to 469 (NNGNGVTDSPSTRSESP) shows a compositional bias: polar residues. A WW domain is found at 501 to 534 (RSLPKGWQFANDPQGKVYYYNLELNIQQWDFPKA). Basic and acidic residues-rich tracts occupy residues 555–568 (NRRD…ETRE), 682–734 (KRLE…KGEE), and 755–768 (TVKK…IDLE).

The protein belongs to the class V-like SAM-binding methyltransferase superfamily. Histone-lysine methyltransferase family. SET2 subfamily.

Its subcellular location is the nucleus. The protein resides in the chromosome. It catalyses the reaction L-lysyl(36)-[histone H3] + 3 S-adenosyl-L-methionine = N(6),N(6),N(6)-trimethyl-L-lysyl(36)-[histone H3] + 3 S-adenosyl-L-homocysteine + 3 H(+). Its function is as follows. Histone methyltransferase that trimethylates histone H3 'Lys-36' forming H3K36me3. Involved in transcription elongation as well as in transcription repression. This Yarrowia lipolytica (strain CLIB 122 / E 150) (Yeast) protein is Histone-lysine N-methyltransferase, H3 lysine-36 specific (set-2).